Here is a 562-residue protein sequence, read N- to C-terminus: MNTNEAKEYLARREIPQLFESLLNGLMCSKPEDPVEYLESCLQKVKELGGCDKVKWDTFVSQEKKTLPPLNGGQSRRSFLRNVMPENSNFPYRRYDRLPPIHQFSIESDTDLSETAELIEEYEVFDPTRPRPKIILVIGGPGSGKGTQSLKIAERYGFQYISVGELLRKKIHSTSSNRKWSLIAKIITTGELAPQETTITEIKQKLMQMPDEVGIVIDGFPRDVAQALSFEDQICTPDLVVFLACTNQRLKERLLKRAEQQGRPDDNLKATQRRLMNFKQNAAPLVKYFQEKGLIMTFDADRDEDEVFYDISMAVDSKLFPNKEAAAGSSDLDPSMMLDTGEVIDTGSDYEDQGDDQLNVFGEDTMGGFMEDLKKCKIIFMIGGPGSGKGTQCGKLAEKYGFTHLSTDELLQNELSSESGRSKLIRDIMERGELVPSGIILELLKEAMVASLSNTKGFLIDGYPREVKQGEEFGRRIGDPHLVICMDCSADTMTNRLLQRSRNSPQADDNTTTIAKRLETYYRASIPVVAYYETKTQLHKINAEGTPEEVFLQLCTAIDSIF.

2 adenylate kinase regions span residues 133 to 316 (KIIL…MAVD) and 377 to 559 (KIIF…TAID). 142–147 (GSGKGT) contributes to the ATP binding site. The NMP 1 stretch occupies residues 162–193 (SVGELLRKKIHSTSSNRKWSLIAKIITTGELA). Residues R168, 191–193 (ELA), 219–222 (GFPR), and Q226 contribute to the AMP site. An LID 1 region spans residues 256-266 (KRAEQQGRPDD). ATP is bound at residue R257. R263 and R274 together coordinate AMP. 386-391 (GSGKGT) provides a ligand contact to ATP. The interval 406–435 (STDELLQNELSSESGRSKLIRDIMERGELV) is NMP 2. AMP is bound by residues T407, 433 to 435 (ELV), 462 to 465 (GYPR), and Q469. Residues 499-509 (QRSRNSPQADD) form an LID 2 region. ATP is bound at residue R500. R517 is a binding site for AMP. G545 provides a ligand contact to ATP.

Belongs to the adenylate kinase family. In terms of assembly, monomer.

The protein localises to the cytoplasm. It carries out the reaction AMP + ATP = 2 ADP. It catalyses the reaction a 2'-deoxyribonucleoside 5'-diphosphate + ATP = a 2'-deoxyribonucleoside 5'-triphosphate + ADP. The catalysed reaction is a ribonucleoside 5'-diphosphate + ATP = a ribonucleoside 5'-triphosphate + ADP. In terms of biological role, nucleoside monophosphate (NMP) kinase that catalyzes the reversible transfer of the terminal phosphate group between nucleoside triphosphates and monophosphates. Active on AMP and dAMP with ATP as a donor. When GTP is used as phosphate donor, the enzyme phosphorylates AMP, CMP, and to a small extent dCMP. Also displays broad nucleoside diphosphate kinase activity. This chain is Adenylate kinase isoenzyme 5 (Ak5), found in Bos taurus (Bovine).